A 506-amino-acid polypeptide reads, in one-letter code: Probable UTP--glucose-1-phosphate uridylyltransferase (506 aa).

Phosphoserine occurs at positions 15 and 17. UTP-binding positions include 115–118 (LNGG), K129, Q192, and G221. Position 117 to 118 (117 to 118 (GG)) interacts with substrate. K129 is a binding site for Mg(2+). Substrate is bound by residues H222 and 250 to 252 (NID). UTP is bound by residues D252 and K394. Residue D252 coordinates Mg(2+). K394 is an active-site residue. The tract at residues 455 to 506 (HLTITGDVNIGRNVTLKGTVIIVASDANRIDIPNGSVLENCVITGNLNILEH) is oligomerization.

Belongs to the UDPGP type 1 family. As to quaternary structure, homooctamer.

The protein resides in the cytoplasm. The protein localises to the nucleus. It carries out the reaction alpha-D-glucose 1-phosphate + UTP + H(+) = UDP-alpha-D-glucose + diphosphate. Functionally, plays a central role as a glucosyl donor in cellular metabolic pathways. In Schizosaccharomyces pombe (strain 972 / ATCC 24843) (Fission yeast), this protein is Probable UTP--glucose-1-phosphate uridylyltransferase (fyu1).